An 870-amino-acid polypeptide reads, in one-letter code: DNA mismatch repair protein MutS (870 aa).

ATP is bound at residue 620-627 (GPNMAGKS).

It belongs to the DNA mismatch repair MutS family.

This protein is involved in the repair of mismatches in DNA. It is possible that it carries out the mismatch recognition step. This protein has a weak ATPase activity. This chain is DNA mismatch repair protein MutS, found in Acetivibrio thermocellus (strain ATCC 27405 / DSM 1237 / JCM 9322 / NBRC 103400 / NCIMB 10682 / NRRL B-4536 / VPI 7372) (Clostridium thermocellum).